Here is a 326-residue protein sequence, read N- to C-terminus: MDKAPEQPFSGKLPDVQATSPDVRINLTRVGVKNVKKLVEVTRPDKRPVVFISNFDVYVDLPGSLKGANLSRNFEVIDEVLQQAIDGEVNEIENLCSAVARKLLDRHEYADRTEVLMRSEFMVKRETPVSHTTCHEVVKVHARAIAKRTFRDPIVRKSIGAEVTGMTACPCAQNIMKERANHVLEGLGIDQKTIDAFFAEVPMATHNQRGRGFLCIETDDDQHVDLEKIIRILKESMSAGIYELLKRGDESAVVLAAHKNPRFVEDCVREMAKKVLSGFDYLPGDAVVTIKQTNEESIHQHDAYAERRATLAELQDELNGDHKTSC.

It belongs to the GTP cyclohydrolase IV family. In terms of assembly, homodimer. The cofactor is Fe(2+).

It carries out the reaction GTP + H2O = 7,8-dihydroneopterin 2',3'-cyclic phosphate + formate + diphosphate + H(+). Its pathway is cofactor biosynthesis; 5,6,7,8-tetrahydromethanopterin biosynthesis. In terms of biological role, converts GTP to 7,8-dihydro-D-neopterin 2',3'-cyclic phosphate, the first intermediate in the biosynthesis of coenzyme methanopterin. In Methanoregula boonei (strain DSM 21154 / JCM 14090 / 6A8), this protein is GTP cyclohydrolase MptA.